Reading from the N-terminus, the 740-residue chain is Catalase-peroxidase (740 aa).

Residues M1 to I32 form a disordered region. A cross-link (tryptophyl-tyrosyl-methioninium (Trp-Tyr) (with M-263)) is located at residues W113–Y237. The Proton acceptor role is filled by H114. A cross-link (tryptophyl-tyrosyl-methioninium (Tyr-Met) (with W-113)) is located at residues Y237–M263. Position 278 (H278) interacts with heme b.

Belongs to the peroxidase family. Peroxidase/catalase subfamily. Homodimer or homotetramer. The cofactor is heme b. Post-translationally, formation of the three residue Trp-Tyr-Met cross-link is important for the catalase, but not the peroxidase activity of the enzyme.

The enzyme catalyses H2O2 + AH2 = A + 2 H2O. It catalyses the reaction 2 H2O2 = O2 + 2 H2O. In terms of biological role, bifunctional enzyme with both catalase and broad-spectrum peroxidase activity. May play a role in the intracellular survival of mycobacteria. This Mycolicibacterium smegmatis (Mycobacterium smegmatis) protein is Catalase-peroxidase.